The sequence spans 593 residues: NADH-quinone oxidoreductase subunit C/D (593 aa).

The interval 1 to 184 (MTADNALYIP…DPYSLTLAKQ (184 aa)) is NADH dehydrogenase I subunit C. The segment at 208 to 593 (DYMFLNLGPN…IDFVMADVDR (386 aa)) is NADH dehydrogenase I subunit D.

It in the N-terminal section; belongs to the complex I 30 kDa subunit family. This sequence in the C-terminal section; belongs to the complex I 49 kDa subunit family. In terms of assembly, NDH-1 is composed of 13 different subunits. Subunits NuoB, CD, E, F, and G constitute the peripheral sector of the complex.

The protein localises to the cell inner membrane. It carries out the reaction a quinone + NADH + 5 H(+)(in) = a quinol + NAD(+) + 4 H(+)(out). Its function is as follows. NDH-1 shuttles electrons from NADH, via FMN and iron-sulfur (Fe-S) centers, to quinones in the respiratory chain. The immediate electron acceptor for the enzyme in this species is believed to be ubiquinone. Couples the redox reaction to proton translocation (for every two electrons transferred, four hydrogen ions are translocated across the cytoplasmic membrane), and thus conserves the redox energy in a proton gradient. The sequence is that of NADH-quinone oxidoreductase subunit C/D from Pseudomonas savastanoi pv. phaseolicola (strain 1448A / Race 6) (Pseudomonas syringae pv. phaseolicola (strain 1448A / Race 6)).